The following is a 970-amino-acid chain: Isoleucine--tRNA ligase (970 aa).

The 'HIGH' region signature appears at 65-75 (PYANGHLHIGH). L-isoleucyl-5'-AMP is bound at residue glutamate 608. The 'KMSKS' region motif lies at 649–653 (KMSKS). Position 652 (lysine 652) interacts with ATP. Cysteine 943, cysteine 946, cysteine 962, and cysteine 965 together coordinate Zn(2+).

It belongs to the class-I aminoacyl-tRNA synthetase family. IleS type 1 subfamily. In terms of assembly, monomer. Zn(2+) is required as a cofactor.

It localises to the cytoplasm. It carries out the reaction tRNA(Ile) + L-isoleucine + ATP = L-isoleucyl-tRNA(Ile) + AMP + diphosphate. Its function is as follows. Catalyzes the attachment of isoleucine to tRNA(Ile). As IleRS can inadvertently accommodate and process structurally similar amino acids such as valine, to avoid such errors it has two additional distinct tRNA(Ile)-dependent editing activities. One activity is designated as 'pretransfer' editing and involves the hydrolysis of activated Val-AMP. The other activity is designated 'posttransfer' editing and involves deacylation of mischarged Val-tRNA(Ile). The protein is Isoleucine--tRNA ligase of Ruegeria pomeroyi (strain ATCC 700808 / DSM 15171 / DSS-3) (Silicibacter pomeroyi).